Here is a 71-residue protein sequence, read N- to C-terminus: Defensin-like protein 124 (71 aa).

A signal peptide spans 1–25 (MSKPTVIVIFMAILVLGMATKETQG). Intrachain disulfides connect Cys-28-Cys-71, Cys-40-Cys-60, Cys-45-Cys-65, and Cys-49-Cys-67.

The protein belongs to the DEFL family.

The protein localises to the secreted. In Arabidopsis thaliana (Mouse-ear cress), this protein is Defensin-like protein 124 (LCR16).